A 763-amino-acid chain; its full sequence is Dual specificity tyrosine-phosphorylation-regulated kinase 1A (763 aa).

Serine 14 is modified (phosphoserine). Residues 32–57 (GQMPHSHQYSDRRQPNISDQQVSALS) are disordered. Polar residues predominate over residues 46 to 57 (PNISDQQVSALS). Tyrosine 111 bears the Phosphotyrosine; by autocatalysis mark. The tract at residues 115-136 (KKRRHQQGQGDDSSHKKERKVY) is disordered. The Bipartite nuclear localization signal signature appears at 117–134 (RRHQQGQGDDSSHKKERK). The residue at position 140 (tyrosine 140) is a Phosphotyrosine; by autocatalysis. Tyrosine 145 bears the Phosphotyrosine mark. Position 159 is a phosphotyrosine; by autocatalysis (tyrosine 159). Positions 159–479 (YEIDSLIGKG…PYYALQHSFF (321 aa)) constitute a Protein kinase domain. 165–173 (IGKGSFGQV) provides a ligand contact to ATP. Tyrosine 177 is modified (phosphotyrosine; by autocatalysis). Lysine 188 contributes to the ATP binding site. Tyrosine 219 carries the phosphotyrosine; by autocatalysis modification. Residue 238 to 241 (FEML) participates in ATP binding. Aspartate 287 functions as the Proton acceptor in the catalytic mechanism. Phosphoserine; by autocatalysis is present on serine 310. A phosphotyrosine; by autocatalysis mark is found at tyrosine 319 and tyrosine 321. Threonine 402 is modified (phosphothreonine; by autocatalysis). The disordered stretch occupies residues 408–442 (TKDGKREYKPPGTRKLHNILGVETGGPGGRRAGES). The residue at position 449 (tyrosine 449) is a Phosphotyrosine; by autocatalysis. Positions 485–501 (EGTNTSNSVSTSPAMEQ) are enriched in polar residues. 3 disordered regions span residues 485 to 540 (EGTN…HSGG), 596 to 679 (NALH…GNQA), and 744 to 763 (DREE…VASS). The span at 502 to 525 (SQSSGTTSSTSSSSGGSSGTSNSG) shows a compositional bias: low complexity. 2 positions are modified to phosphoserine: serine 529 and serine 538. Positions 595–625 (QNALHHHHGNSSHHHHHHHHHHHHHGQQALG) are histidine-rich domain (HRD). The span at 598–620 (LHHHHGNSSHHHHHHHHHHHHHG) shows a compositional bias: basic residues. Residues 634 to 645 (NSPTNSSSTQDS) are compositionally biased toward polar residues. Residues 654–672 (SMTSLSSSTTSSSTSSSST) show a composition bias toward low complexity. 2 positions are modified to phosphoserine: serine 748 and serine 758. Positions 754–763 (CVQQSPVASS) are enriched in polar residues.

Belongs to the protein kinase superfamily. CMGC Ser/Thr protein kinase family. MNB/DYRK subfamily. Interacts with RAD54L2/ARIP4. Interacts with CRY2. Interacts with RANBP9. Interacts with WDR68. Interacts with SIRT1. In terms of assembly, (Microbial infection) Interacts with human adenovirus 5 E1A protein. Post-translationally, autophosphorylated on numerous tyrosine residues. Can also autophosphorylate on serine and threonine residues (in vitro). As to expression, ubiquitous. Highest levels in skeletal muscle, testis, fetal lung and fetal kidney.

Its subcellular location is the nucleus. The protein resides in the nucleus speckle. The enzyme catalyses L-seryl-[protein] + ATP = O-phospho-L-seryl-[protein] + ADP + H(+). It catalyses the reaction L-threonyl-[protein] + ATP = O-phospho-L-threonyl-[protein] + ADP + H(+). It carries out the reaction L-tyrosyl-[protein] + ATP = O-phospho-L-tyrosyl-[protein] + ADP + H(+). The catalysed reaction is [DNA-directed RNA polymerase] + ATP = phospho-[DNA-directed RNA polymerase] + ADP + H(+). With respect to regulation, inhibited by RANBP9. Inhibited by harmine, leucettamine B and leucettine L41. Dual-specificity kinase which possesses both serine/threonine and tyrosine kinase activities. Exhibits a substrate preference for proline at position P+1 and arginine at position P-3. Plays an important role in double-strand breaks (DSBs) repair following DNA damage. Mechanistically, phosphorylates RNF169 and increases its ability to block accumulation of TP53BP1 at the DSB sites thereby promoting homologous recombination repair (HRR). Also acts as a positive regulator of transcription by acting as a CTD kinase that mediates phosphorylation of the CTD (C-terminal domain) of the large subunit of RNA polymerase II (RNAP II) POLR2A. May play a role in a signaling pathway regulating nuclear functions of cell proliferation. Modulates alternative splicing by phosphorylating the splice factor SRSF6. Has pro-survival function and negatively regulates the apoptotic process. Promotes cell survival upon genotoxic stress through phosphorylation of SIRT1. This in turn inhibits p53/TP53 activity and apoptosis. Phosphorylates SEPTIN4, SEPTIN5 and SF3B1 at 'Thr-434'. The polypeptide is Dual specificity tyrosine-phosphorylation-regulated kinase 1A (Homo sapiens (Human)).